Reading from the N-terminus, the 445-residue chain is Homoserine dehydrogenase (445 aa).

Phenylalanine 26, threonine 28, and valine 29 together coordinate NADPH. NAD(+) is bound by residues valine 29 and alanine 58. Valine 29 contributes to the NADP(+) binding site. Residue lysine 119 participates in NADPH binding. Residue lysine 119 coordinates NADP(+). 4 residues coordinate Na(+): glutamate 143, valine 146, glycine 148, and isoleucine 150. 2 residues coordinate NADP(+): glycine 201 and glutamate 204. 2 residues coordinate L-homoserine: glutamate 204 and aspartate 215. The active-site Proton donor is lysine 219. Position 321 (glycine 321) interacts with NADPH. Position 321 (glycine 321) interacts with NAD(+). Glycine 321 contributes to the NADP(+) binding site. An ACT domain is found at histidine 368 to aspartate 445.

The protein belongs to the homoserine dehydrogenase family. It depends on a metal cation as a cofactor.

The catalysed reaction is L-homoserine + NADP(+) = L-aspartate 4-semialdehyde + NADPH + H(+). It carries out the reaction L-homoserine + NAD(+) = L-aspartate 4-semialdehyde + NADH + H(+). It functions in the pathway amino-acid biosynthesis; L-methionine biosynthesis via de novo pathway; L-homoserine from L-aspartate: step 3/3. It participates in amino-acid biosynthesis; L-threonine biosynthesis; L-threonine from L-aspartate: step 3/5. With respect to regulation, feedback inhibition by threonine. In terms of biological role, catalyzes the conversion of L-aspartate-beta-semialdehyde (L-Asa) to L-homoserine (L-Hse), the third step in the biosynthesis of threonine and methionine from aspartate. The polypeptide is Homoserine dehydrogenase (hom) (Corynebacterium glutamicum (strain ATCC 13032 / DSM 20300 / JCM 1318 / BCRC 11384 / CCUG 27702 / LMG 3730 / NBRC 12168 / NCIMB 10025 / NRRL B-2784 / 534)).